The following is a 223-amino-acid chain: Guanylate kinase (223 aa).

Residues 1–22 (MTADGGPDVRHGTRPEPSGDGR) form a disordered region. A compositionally biased stretch (basic and acidic residues) spans 7–19 (PDVRHGTRPEPSG). Residues 21-201 (GRVVVLSGPS…ACAELVSLLV (181 aa)) enclose the Guanylate kinase-like domain. 28 to 35 (GPSAVGKS) is a binding site for ATP. A disordered region spans residues 204-223 (APDRHDTSGRTGRQTTSHPD). Over residues 212 to 223 (GRTGRQTTSHPD) the composition is skewed to polar residues.

This sequence belongs to the guanylate kinase family.

It is found in the cytoplasm. It carries out the reaction GMP + ATP = GDP + ADP. Functionally, essential for recycling GMP and indirectly, cGMP. The sequence is that of Guanylate kinase from Mycolicibacterium paratuberculosis (strain ATCC BAA-968 / K-10) (Mycobacterium paratuberculosis).